The following is a 235-amino-acid chain: Large ribosomal subunit protein uL1 (235 aa).

This sequence belongs to the universal ribosomal protein uL1 family. In terms of assembly, part of the 50S ribosomal subunit.

Binds directly to 23S rRNA. The L1 stalk is quite mobile in the ribosome, and is involved in E site tRNA release. Functionally, protein L1 is also a translational repressor protein, it controls the translation of the L11 operon by binding to its mRNA. The polypeptide is Large ribosomal subunit protein uL1 (Prochlorococcus marinus (strain MIT 9215)).